The primary structure comprises 204 residues: Large ribosomal subunit protein uL4 (204 aa).

The segment at 47–69 is disordered; that stretch reads KAQKNRAAVSGGGKKPWRQKGTG.

This sequence belongs to the universal ribosomal protein uL4 family. Part of the 50S ribosomal subunit.

One of the primary rRNA binding proteins, this protein initially binds near the 5'-end of the 23S rRNA. It is important during the early stages of 50S assembly. It makes multiple contacts with different domains of the 23S rRNA in the assembled 50S subunit and ribosome. In terms of biological role, forms part of the polypeptide exit tunnel. This is Large ribosomal subunit protein uL4 from Teredinibacter turnerae (strain ATCC 39867 / T7901).